The sequence spans 548 residues: Beta-caryophyllene synthase (548 aa).

Residues R268, D305, D309, R446, and D449 each contribute to the (2E,6E)-farnesyl diphosphate site. Mg(2+) is bound by residues D305 and D309. Positions 305 to 309 (DDIYD) match the DDXXD motif motif. Residues D449 and E457 each coordinate Mg(2+).

Belongs to the terpene synthase family. The cofactor is Mg(2+).

The catalysed reaction is (2E,6E)-farnesyl diphosphate = (-)-(E)-beta-caryophyllene + diphosphate. Its pathway is secondary metabolite biosynthesis; terpenoid biosynthesis. Its function is as follows. Sesquiterpene synthase that catalyzes the formation of sesquiterpenes and sesquiterpenoid alcohols. Converts farnesyl diphosphate (FPP) to beta-caryophyllene. Can use geranyl diphosphate (GPP) to produce myrcene, limonene and camphene. The polypeptide is Beta-caryophyllene synthase (Lavandula angustifolia (Lavender)).